The sequence spans 619 residues: Sodium-dependent dopamine transporter (619 aa).

Topologically, residues 1 to 56 are cytoplasmic; it reads MSKSKCSVGPMSSVVAPAKEPNAVGPREVELILVKEQNGVQLTNSTLINPPQTPVE. The chain crosses the membrane as a discontinuously helical span at residues 57-95; sequence VQERETWSKKIDFLLSVIGFAVDLANVWRFPYLCYKNGG. Residues Gly75, Ala77, Val78, Asp79, and Asn82 each contribute to the Na(+) site. Asp79 contacts dopamine. Transmembrane regions (helical) follow at residues 96–127 and 128–171; these read GAFL…NREG and AAGV…FSSF. Positions 149 and 153 each coordinate dopamine. At 172–235 the chain is on the extracellular side; it reads TMDLPWIHCN…SRGIDDLGPP (64 aa). Cysteines 180 and 189 form a disulfide. N-linked (GlcNAc...) asparagine glycans are attached at residues Asn181, Asn188, Asn196, and Asn204. A run of 2 helical transmembrane segments spans residues 236–255 and 256–286; these read RWQL…FSLW and KGVK…GVTL. Residues 287-305 lie on the Extracellular side of the membrane; the sequence is PGAMDGIRAYLSVDFYRLC. A discontinuously helical transmembrane segment spans residues 306–334; that stretch reads EASVWIDAATQVCFSLGVGFGVLIAFSSY. Residue Gln316 coordinates chloride. Residue Phe319 participates in dopamine binding. The Na(+) site is built by Ser320 and Asn352. Ser320 contacts chloride. A helical transmembrane segment spans residues 335–375; sequence NKFTNNCYRDAIITTSINSLTSFSSGFVVFSFLGYMAQKHN. Ser356 is a chloride binding site. Residues 376–399 are Extracellular-facing; that stretch reads VPIRDVATDGPGLIFIIYPEAIAT. Helical transmembrane passes span 400–441, 442–465, and 466–498; these read LPLS…QLLH, RHRE…CVTN, and GGIY…AWFY. Na(+) is bound by residues Leu417, Asp420, and Ser421. Residues Ser421 and Ala422 each coordinate dopamine. Residues 499-515 are Cytoplasmic-facing; that stretch reads GVQQFSDDIKQMTGQRP. The helical transmembrane segment at 516 to 541 threads the bilayer; that stretch reads NLYWRLCWKLVSPCFLLYVVVVSIVT. At 542–552 the chain is on the extracellular side; sequence FRPPHYGAYIF. A helical transmembrane segment spans residues 553-582; that stretch reads PDWANALGWIIATSSMAMVPIYATYKFCSL. The segment at 560–589 is interaction with TGFB1I1; that stretch reads GWIIATSSMAMVPIYATYKFCSLPGSFREK. The Cytoplasmic portion of the chain corresponds to 583-619; that stretch reads PGSFREKLAYAITPEKDRQLVDRGEVRQFTLRHWLLV.

Belongs to the sodium:neurotransmitter symporter (SNF) (TC 2.A.22) family. SLC6A3 subfamily. In terms of assembly, monomer. Homooligomer; disulfide-linked. Interacts with PRKCABP and TGFB1I1. Interacts (via N-terminus) with SYNGR3 (via N-terminus). Interacts with SLC18A2. Interacts with TOR1A (ATP-bound); TOR1A regulates SLC6A3 subcellular location. Interacts with alpha-synuclein/SNCA. Interacts with SEPTIN4. Found in the substantia nigra and ventral tegmental dopamine neurons, in fibers of the medial forebrain bundle ascending into the striatum, and within dense fiber networks and varicosities in the dorsal and ventral striatum (at protein level). Lower expression in the cortex (at protein level). Absent from the corpus callosum. Expressed throughout the retina at postnatal day 8.

It localises to the cell membrane. It is found in the cell projection. The protein localises to the neuron projection. Its subcellular location is the axon. The enzyme catalyses dopamine(out) + chloride(out) + Na(+)(out) = dopamine(in) + chloride(in) + Na(+)(in). The catalysed reaction is (R)-noradrenaline(out) + chloride(out) + Na(+)(out) = (R)-noradrenaline(in) + chloride(in) + Na(+)(in). It carries out the reaction dopamine(out) + chloride(out) + 2 Na(+)(out) = dopamine(in) + chloride(in) + 2 Na(+)(in). Inhibited by amphetamine, bupropion, cocaine and ritalin. Inhibited by zinc ions. In terms of biological role, mediates sodium- and chloride-dependent transport of dopamine. Also mediates sodium- and chloride-dependent transport of norepinephrine (also known as noradrenaline). Regulator of light-dependent retinal hyaloid vessel regression, downstream of OPN5 signaling. This chain is Sodium-dependent dopamine transporter (Slc6a3), found in Mus musculus (Mouse).